Here is a 108-residue protein sequence, read N- to C-terminus: Large ribosomal subunit protein P1B (108 aa).

The span at 72 to 84 shows a compositional bias: low complexity; sequence AGSASGAAAGGEA. The segment at 72–108 is disordered; the sequence is AGSASGAAAGGEAAAEEAAEEEAAEESDDDMGFGLFD. The segment covering 85 to 102 has biased composition (acidic residues); the sequence is AAEEAAEEEAAEESDDDM.

Belongs to the eukaryotic ribosomal protein P1/P2 family. P1 and P2 exist as dimers at the large ribosomal subunit. Phosphorylated.

In terms of biological role, plays an important role in the elongation step of protein synthesis. The polypeptide is Large ribosomal subunit protein P1B (RPP1B) (Candida albicans (Yeast)).